A 209-amino-acid polypeptide reads, in one-letter code: Ribosomal RNA small subunit methyltransferase G (209 aa).

S-adenosyl-L-methionine contacts are provided by residues Gly-77, Met-82, 128-129, and Arg-143; that span reads VE.

Belongs to the methyltransferase superfamily. RNA methyltransferase RsmG family.

It is found in the cytoplasm. It catalyses the reaction guanosine(527) in 16S rRNA + S-adenosyl-L-methionine = N(7)-methylguanosine(527) in 16S rRNA + S-adenosyl-L-homocysteine. Functionally, specifically methylates the N7 position of guanine in position 527 of 16S rRNA. The chain is Ribosomal RNA small subunit methyltransferase G from Chromobacterium violaceum (strain ATCC 12472 / DSM 30191 / JCM 1249 / CCUG 213 / NBRC 12614 / NCIMB 9131 / NCTC 9757 / MK).